A 216-amino-acid polypeptide reads, in one-letter code: Guanylate kinase (216 aa).

Residues Gly11 to Leu189 enclose the Guanylate kinase-like domain. Gly18–Gly25 provides a ligand contact to ATP.

The protein belongs to the guanylate kinase family.

It is found in the cytoplasm. It catalyses the reaction GMP + ATP = GDP + ADP. Essential for recycling GMP and indirectly, cGMP. This chain is Guanylate kinase (gmk), found in Clostridium perfringens (strain 13 / Type A).